The chain runs to 257 residues: High affinity immunoglobulin epsilon receptor subunit alpha (257 aa).

The first 25 residues, 1-25, serve as a signal peptide directing secretion; sequence MAPAMESPTLLCVALLFFAPDGVLA. At 26–205 the chain is on the extracellular side; the sequence is VPQKPKVSLN…KAPREKYWLQ (180 aa). Ig-like domains follow at residues 30–110 and 111–193; these read PKVS…EVFS and DWLL…LNIT. N-linked (GlcNAc...) asparagine glycosylation is found at Asn46, Asn67, Asn75, Asn99, Asn160, Asn165, and Asn191. A disulfide bond links Cys51 and Cys93. A disulfide bridge connects residues Cys132 and Cys176. Residues 206 to 224 form a helical membrane-spanning segment; sequence FFIPLLVVILFAVDTGLFI. Topologically, residues 225 to 257 are cytoplasmic; the sequence is STQQQVTFLLKIKRTRKGFRLLNPHPKPNPKNN.

Tetramer of an alpha chain, a beta chain, and two disulfide linked gamma chains. Interacts with IGHE (via CH3 region). In terms of tissue distribution, expressed in eosinophils.

It is found in the cell membrane. In terms of biological role, high-affinity receptor for immunoglobulin epsilon/IgE. Mediates IgE effector functions in myeloid cells. Upon IgE binding and antigen/allergen cross-linking initiates signaling pathways that lead to myeloid cell activation and differentiation. On mast cells, basophils and eosinophils stimulates the secretion of vasoactive amines, lipid mediators and cytokines that contribute to inflammatory response, tissue remodeling and cytotoxicity against microbes. Triggers the immediate hypersensitivity response to allergens as a host defense mechanism against helminth parasites, pathogenic bacteria and venom toxicity. When dysregulated, it can elicit harmful life-threatening allergic and anaphylactic reactions. The protein is High affinity immunoglobulin epsilon receptor subunit alpha (FCER1A) of Homo sapiens (Human).